The primary structure comprises 145 residues: uncharacterized protein (145 aa).

The CBM3 domain maps to 1–145 (LQYRAADTNA…NGQIVWGTAP (145 aa)).

This is an uncharacterized protein from Paenibacillus lautus (Bacillus lautus).